Reading from the N-terminus, the 396-residue chain is Phosphoglycerate kinase (396 aa).

Residues 21-23 (DLN), Arg36, 59-62 (HLGR), Arg113, and Arg146 contribute to the substrate site. ATP is bound by residues Lys197, Glu319, and 345–348 (GGDT).

It belongs to the phosphoglycerate kinase family. Monomer.

It localises to the cytoplasm. It carries out the reaction (2R)-3-phosphoglycerate + ATP = (2R)-3-phospho-glyceroyl phosphate + ADP. It functions in the pathway carbohydrate degradation; glycolysis; pyruvate from D-glyceraldehyde 3-phosphate: step 2/5. The polypeptide is Phosphoglycerate kinase (Legionella pneumophila (strain Paris)).